The sequence spans 456 residues: Riboflavin transporter RibZ (456 aa).

14 helical membrane passes run 5-25 (WIVLIIICIGVFMSTLDGSIL), 45-65 (WVVTAYMLVVTATMLFFGKLG), 78-98 (FFIFTIGSFLCSMSNNLSTLI), 105-125 (AVGASILMATGLGIVSNAFPA), 134-154 (ITGAVVGIGNMSGPVIGGIIL), 158-178 (GWPSIFIINIPIGIIAVFLGI), 192-212 (SFDIPGLLLFASCTTLILLAM), 220-240 (LYLGITALIIFLLLALREVKF), 260-280 (IIGVACYFPQMAVSFLLPFYL), 289-309 (MMAGYVMTVHPLIMVLIAPIA), 321-341 (ILTASFSFMTISLVGMALLKA), 343-363 (SPLYLLIVCLVIFGLGLGAFS), 385-405 (FLATIRNLSFALGTAFFSSFF), and 428-448 (QSYWIAASVCFIGLILTVFFM).

It belongs to the major facilitator superfamily.

It is found in the cell membrane. Transports riboflavin into the cell. This Clostridioides difficile (strain 630) (Peptoclostridium difficile) protein is Riboflavin transporter RibZ.